Here is a 368-residue protein sequence, read N- to C-terminus: Probable dual-specificity RNA methyltransferase RlmN (368 aa).

Glu109 functions as the Proton acceptor in the catalytic mechanism. The Radical SAM core domain maps to 115 to 355; the sequence is YPDRVTMCIS…VTIRDTRGQE (241 aa). A disulfide bridge connects residues Cys122 and Cys360. [4Fe-4S] cluster is bound by residues Cys129, Cys133, and Cys136. S-adenosyl-L-methionine is bound by residues 184–185, Ser218, 241–243, and Asn317; these read GE and SLH. Residue Cys360 is the S-methylcysteine intermediate of the active site.

It belongs to the radical SAM superfamily. RlmN family. It depends on [4Fe-4S] cluster as a cofactor.

The protein resides in the cytoplasm. The catalysed reaction is adenosine(2503) in 23S rRNA + 2 reduced [2Fe-2S]-[ferredoxin] + 2 S-adenosyl-L-methionine = 2-methyladenosine(2503) in 23S rRNA + 5'-deoxyadenosine + L-methionine + 2 oxidized [2Fe-2S]-[ferredoxin] + S-adenosyl-L-homocysteine. It carries out the reaction adenosine(37) in tRNA + 2 reduced [2Fe-2S]-[ferredoxin] + 2 S-adenosyl-L-methionine = 2-methyladenosine(37) in tRNA + 5'-deoxyadenosine + L-methionine + 2 oxidized [2Fe-2S]-[ferredoxin] + S-adenosyl-L-homocysteine. Specifically methylates position 2 of adenine 2503 in 23S rRNA and position 2 of adenine 37 in tRNAs. In Streptomyces coelicolor (strain ATCC BAA-471 / A3(2) / M145), this protein is Probable dual-specificity RNA methyltransferase RlmN.